The primary structure comprises 501 residues: ATP synthase subunit alpha (501 aa).

Glycine 169–threonine 176 lines the ATP pocket.

The protein belongs to the ATPase alpha/beta chains family. In terms of assembly, F-type ATPases have 2 components, CF(1) - the catalytic core - and CF(0) - the membrane proton channel. CF(1) has five subunits: alpha(3), beta(3), gamma(1), delta(1), epsilon(1). CF(0) has three main subunits: a(1), b(2) and c(9-12). The alpha and beta chains form an alternating ring which encloses part of the gamma chain. CF(1) is attached to CF(0) by a central stalk formed by the gamma and epsilon chains, while a peripheral stalk is formed by the delta and b chains.

The protein localises to the cell membrane. The enzyme catalyses ATP + H2O + 4 H(+)(in) = ADP + phosphate + 5 H(+)(out). Its function is as follows. Produces ATP from ADP in the presence of a proton gradient across the membrane. The alpha chain is a regulatory subunit. The polypeptide is ATP synthase subunit alpha (Streptococcus pyogenes serotype M2 (strain MGAS10270)).